The following is a 155-amino-acid chain: Small ribosomal subunit protein uS7 (155 aa).

The protein belongs to the universal ribosomal protein uS7 family. As to quaternary structure, part of the 30S ribosomal subunit. Contacts proteins S9 and S11.

Its function is as follows. One of the primary rRNA binding proteins, it binds directly to 16S rRNA where it nucleates assembly of the head domain of the 30S subunit. Is located at the subunit interface close to the decoding center, probably blocks exit of the E-site tRNA. The protein is Small ribosomal subunit protein uS7 of Mycoplasmoides gallisepticum (strain R(low / passage 15 / clone 2)) (Mycoplasma gallisepticum).